Consider the following 196-residue polypeptide: Protein TEX261 (196 aa).

A run of 5 helical transmembrane segments spans residues 3-23 (FMYVLSWLSLFIQVAFITLAV), 42-62 (SRIIKYMIWFSTAVLIGLYVF), 70-90 (IGVGLFTNLVYFGLLQTFPFI), 97-117 (FILSCGLVVVNHYLAFQFFAE), and 125-145 (VLAYFTFCLWIIPFAFFVSLS).

It belongs to the SVP26 family. Detected in testis.

The protein localises to the membrane. The polypeptide is Protein TEX261 (Tex261) (Mus musculus (Mouse)).